The sequence spans 112 residues: C-C motif chemokine 27 (112 aa).

The first 24 residues, 1-24 (MKGPPTFCSLLLLSLLLSPDPTAA), serve as a signal peptide directing secretion. 2 disulfides stabilise this stretch: C33-C62 and C34-C77.

It belongs to the intercrine beta (chemokine CC) family. In terms of assembly, monomer, dimer, and tetramer. Heparin avidly promotes oligomerization. Interacts with TNFAIP6 (via Link domain). Testis, thymus, placenta, ovary and skin.

It localises to the secreted. Chemotactic factor that attracts skin-associated memory T-lymphocytes. May play a role in mediating homing of lymphocytes to cutaneous sites. Binds to CCR10. The sequence is that of C-C motif chemokine 27 (CCL27) from Homo sapiens (Human).